A 513-amino-acid chain; its full sequence is Probable DNA ligase (513 aa).

Glutamate 213 contacts ATP. Lysine 215 (N6-AMP-lysine intermediate) is an active-site residue. ATP-binding residues include arginine 220, arginine 235, glutamate 264, phenylalanine 304, arginine 376, and lysine 382.

The protein belongs to the ATP-dependent DNA ligase family. Requires Mg(2+) as cofactor.

It catalyses the reaction ATP + (deoxyribonucleotide)n-3'-hydroxyl + 5'-phospho-(deoxyribonucleotide)m = (deoxyribonucleotide)n+m + AMP + diphosphate.. DNA ligase that seals nicks in double-stranded DNA during DNA replication, DNA recombination and DNA repair. This Anaeromyxobacter dehalogenans (strain 2CP-C) protein is Probable DNA ligase.